Reading from the N-terminus, the 433-residue chain is 23S rRNA (uracil(1939)-C(5))-methyltransferase RlmD (433 aa).

The TRAM domain occupies 1-53 (MPVAVIESLDHEGRGVAHVDGKVVFVEGALAGEQVEYTVYRQRPSYDLAEATR). 4 residues coordinate [4Fe-4S] cluster: cysteine 66, cysteine 72, cysteine 75, and cysteine 154. Residues glutamine 263, phenylalanine 292, asparagine 297, glutamate 313, asparagine 341, and aspartate 362 each coordinate S-adenosyl-L-methionine. Cysteine 389 (nucleophile) is an active-site residue.

The protein belongs to the class I-like SAM-binding methyltransferase superfamily. RNA M5U methyltransferase family. RlmD subfamily.

The catalysed reaction is uridine(1939) in 23S rRNA + S-adenosyl-L-methionine = 5-methyluridine(1939) in 23S rRNA + S-adenosyl-L-homocysteine + H(+). Functionally, catalyzes the formation of 5-methyl-uridine at position 1939 (m5U1939) in 23S rRNA. In Aromatoleum aromaticum (strain DSM 19018 / LMG 30748 / EbN1) (Azoarcus sp. (strain EbN1)), this protein is 23S rRNA (uracil(1939)-C(5))-methyltransferase RlmD.